We begin with the raw amino-acid sequence, 86 residues long: LIYAKVECLTTGVRTYVGKQSWPELVGTKGKTAAATIDKENTHVTAVLCPPLTTLAACRTFDFRCDRVRVLINRIGGVVTKTPTVG.

Disulfide bonds link cysteine 8–cysteine 65 and cysteine 49–cysteine 58.

In terms of biological role, serine protease inhibitor which is active against trypsin. Displays strong antifungal activity against a number of phytopathogenic fungi including M.melonis, A.cucumerina, A.solani, C.glaeosporioides and P.capsici. The sequence is that of Trypsin inhibitor from Fagopyrum tataricum (Tartarian buckwheat).